The sequence spans 587 residues: Putative phagocytic receptor 1b (587 aa).

Positions 1-23 (MRLQILLIYLICIIVSSIVLVES) are cleaved as a signal peptide. The next 9 helical transmembrane spans lie at 223–243 (LSVMNSFFLVVLLTAFLAIMI), 294–314 (IGWQFISIVCGILALSLFGMF), 319–339 (GGNMYTAGIVLYALTSGISGY), 354–374 (AWNIVLTATLFVAPLFIVVIL), 390–410 (ILTMIEVITIWLFVGFPLTVV), 448–468 (ILIAGFLPFSAIYIELFYIFN), 480–500 (GILCLVFLILINVTVCITVAL), 524–544 (VVFIYMYSIYYYYYISHMYGL), and 556–576 (IVCFFFFILLGTVGFYSSLIF).

It belongs to the nonaspanin (TM9SF) (TC 9.A.2) family.

It is found in the membrane. Involved in adhesion and phagocytosis of hydrophilic particles. The chain is Putative phagocytic receptor 1b (phg1b) from Dictyostelium discoideum (Social amoeba).